The chain runs to 832 residues: Regulator of drug sensitivity 1 (832 aa).

Positions 15–42 (CLQCKKIKRKCDKLRPACSRCQQNSLQC) form a DNA-binding region, zn(2)-C6 fungal-type.

The protein localises to the nucleus. Its function is as follows. Zinc cluster transcription factor involved in resistance to cycloheximide. The polypeptide is Regulator of drug sensitivity 1 (RDS1) (Saccharomyces cerevisiae (strain ATCC 204508 / S288c) (Baker's yeast)).